The following is a 266-amino-acid chain: DNA-directed RNA polymerase subunit Rpo3 (266 aa).

Residues Cys205, Cys208, and Cys211 each contribute to the [3Fe-4S] cluster site.

Belongs to the archaeal Rpo3/eukaryotic RPB3 RNA polymerase subunit family. In terms of assembly, part of the RNA polymerase complex. [3Fe-4S] cluster serves as cofactor.

Its subcellular location is the cytoplasm. The catalysed reaction is RNA(n) + a ribonucleoside 5'-triphosphate = RNA(n+1) + diphosphate. Its function is as follows. DNA-dependent RNA polymerase (RNAP) catalyzes the transcription of DNA into RNA using the four ribonucleoside triphosphates as substrates. In Methanosarcina acetivorans (strain ATCC 35395 / DSM 2834 / JCM 12185 / C2A), this protein is DNA-directed RNA polymerase subunit Rpo3.